Consider the following 654-residue polypeptide: tRNA 5-methylaminomethyl-2-thiouridine biosynthesis bifunctional protein MnmC (654 aa).

A tRNA (mnm(5)s(2)U34)-methyltransferase region spans residues 1-236; that stretch reads MPTLLQHAQI…KWEVMSGAYV (236 aa). The segment at 262–654 is FAD-dependent cmnm(5)s(2)U34 oxidoreductase; it reads IGAGLAGSSS…FGLRRLIRGK (393 aa).

In the N-terminal section; belongs to the methyltransferase superfamily. tRNA (mnm(5)s(2)U34)-methyltransferase family. It in the C-terminal section; belongs to the DAO family. The cofactor is FAD.

The protein localises to the cytoplasm. The enzyme catalyses 5-aminomethyl-2-thiouridine(34) in tRNA + S-adenosyl-L-methionine = 5-methylaminomethyl-2-thiouridine(34) in tRNA + S-adenosyl-L-homocysteine + H(+). Its function is as follows. Catalyzes the last two steps in the biosynthesis of 5-methylaminomethyl-2-thiouridine (mnm(5)s(2)U) at the wobble position (U34) in tRNA. Catalyzes the FAD-dependent demodification of cmnm(5)s(2)U34 to nm(5)s(2)U34, followed by the transfer of a methyl group from S-adenosyl-L-methionine to nm(5)s(2)U34, to form mnm(5)s(2)U34. The sequence is that of tRNA 5-methylaminomethyl-2-thiouridine biosynthesis bifunctional protein MnmC from Pseudomonas putida (strain ATCC 700007 / DSM 6899 / JCM 31910 / BCRC 17059 / LMG 24140 / F1).